Reading from the N-terminus, the 232-residue chain is Enolase-phosphatase E1 (232 aa).

Belongs to the HAD-like hydrolase superfamily. MasA/MtnC family. In terms of assembly, monomer. It depends on Mg(2+) as a cofactor.

It catalyses the reaction 5-methylsulfanyl-2,3-dioxopentyl phosphate + H2O = 1,2-dihydroxy-5-(methylsulfanyl)pent-1-en-3-one + phosphate. The protein operates within amino-acid biosynthesis; L-methionine biosynthesis via salvage pathway; L-methionine from S-methyl-5-thio-alpha-D-ribose 1-phosphate: step 3/6. It functions in the pathway amino-acid biosynthesis; L-methionine biosynthesis via salvage pathway; L-methionine from S-methyl-5-thio-alpha-D-ribose 1-phosphate: step 4/6. Its function is as follows. Bifunctional enzyme that catalyzes the enolization of 2,3-diketo-5-methylthiopentyl-1-phosphate (DK-MTP-1-P) into the intermediate 2-hydroxy-3-keto-5-methylthiopentenyl-1-phosphate (HK-MTPenyl-1-P), which is then dephosphorylated to form the acireductone 1,2-dihydroxy-3-keto-5-methylthiopentene (DHK-MTPene). In Xylella fastidiosa (strain M12), this protein is Enolase-phosphatase E1.